We begin with the raw amino-acid sequence, 326 residues long: 3-oxopimeloyl-[acyl-carrier-protein] synthase (326 aa).

Residues Cys115 and His253 contribute to the active site. The segment at 254 to 258 is ACP-binding; it reads QANIR. Asn283 is an active-site residue.

The protein belongs to the thiolase-like superfamily. BioZ family.

The catalysed reaction is malonyl-[ACP] + an acyl-CoA + H(+) = a 3-oxoacyl-[ACP] + CO2 + CoA. It carries out the reaction glutaryl-CoA + malonyl-[ACP] + H(+) = 3-oxo-6-carboxyhexanoyl-[ACP] + CO2 + CoA. It participates in cofactor biosynthesis; biotin biosynthesis. In terms of biological role, involved in the formation of the biotin precursor pimeloyl-ACP. Catalyzes the condensation of glutaryl-CoA, an intermediate in lysine degradation, with malonyl-ACP to produce 3-oxopimeloyl-ACP. In Brucella abortus (strain 2308), this protein is 3-oxopimeloyl-[acyl-carrier-protein] synthase.